Reading from the N-terminus, the 143-residue chain is Actin-depolymerizing factor (143 aa).

Residues 11 to 143 (GMGVADHSKN…DLEVLRERAH (133 aa)) enclose the ADF-H domain.

The protein belongs to the actin-binding proteins ADF family.

Functionally, actin-depolymerizing protein. Severs actin filaments (F-actin) and binds to actin monomers. In Vitis vinifera (Grape), this protein is Actin-depolymerizing factor.